The chain runs to 638 residues: Signal recognition particle receptor subunit alpha (638 aa).

Disordered stretches follow at residues 132 to 244 (APTT…GKKA) and 283 to 316 (GTGS…TKGT). Composition is skewed to basic and acidic residues over residues 137–146 (KKFEDSEKAK) and 153–165 (IETR…EKAK). At Ser-177 the chain carries Phosphoserine. Basic and acidic residues predominate over residues 204–239 (LSKEELIRRKREEFIQKHGRGMEKSNKSTKSDAPKE). Thr-284 carries the post-translational modification Phosphothreonine. Residues Ser-296, Ser-297, and Ser-298 each carry the phosphoserine modification. The span at 304 to 314 (AQNSTKPSATK) shows a compositional bias: polar residues. Residues 419-636 (YVVTFCGVNG…NAKAVVAALM (218 aa)) are NG domain. Residue 425–432 (GVNGVGKS) participates in GTP binding. Ser-473 carries the phosphoserine modification. 520-524 (DTAGR) contacts GTP. At Thr-578 the chain carries Phosphothreonine. Position 588–591 (588–591 (TKFD)) interacts with GTP.

Belongs to the GTP-binding SRP family. Heterodimer with SRPRB. Interacts with the signal recognition particle (SRP) complex subunit SRP54. In terms of assembly, (Microbial infection) May interact with Zika virus strain Mr-766 non-structural protein 4A/NS4A. May interact with Zika virus French Polynesia 10087PF/2013 non-structural protein 4A/NS4A. As to quaternary structure, (Microbial infection) May interact with Dengue virus DENV2 16681 non-structural protein 4A/NS4A.

The protein localises to the endoplasmic reticulum membrane. In terms of biological role, component of the signal recognition particle (SRP) complex receptor (SR). Ensures, in conjunction with the SRP complex, the correct targeting of the nascent secretory proteins to the endoplasmic reticulum membrane system. Forms a guanosine 5'-triphosphate (GTP)-dependent complex with the SRP subunit SRP54. SRP receptor compaction and GTPase rearrangement drive SRP-mediated cotranslational protein translocation into the ER. The polypeptide is Signal recognition particle receptor subunit alpha (Homo sapiens (Human)).